The following is a 436-amino-acid chain: Glutamate-1-semialdehyde 2,1-aminomutase (436 aa).

At Lys-276 the chain carries N6-(pyridoxal phosphate)lysine.

Belongs to the class-III pyridoxal-phosphate-dependent aminotransferase family. HemL subfamily. As to quaternary structure, homodimer. The cofactor is pyridoxal 5'-phosphate.

It localises to the cytoplasm. It carries out the reaction (S)-4-amino-5-oxopentanoate = 5-aminolevulinate. It functions in the pathway porphyrin-containing compound metabolism; protoporphyrin-IX biosynthesis; 5-aminolevulinate from L-glutamyl-tRNA(Glu): step 2/2. It participates in porphyrin-containing compound metabolism; chlorophyll biosynthesis. This is Glutamate-1-semialdehyde 2,1-aminomutase from Synechococcus sp. (strain JA-2-3B'a(2-13)) (Cyanobacteria bacterium Yellowstone B-Prime).